Consider the following 258-residue polypeptide: MIIDFKKYSSVRIGNEFEVLVLDQICDFDGFLIGGANNLLVSPKPKNIGILGDGFNFIQILDRNKDFIHLRIGCKTKSSKMYRFAKENNLKGFEYLSKIPGTLGGLLKMNAGLKGECISQNLIKIATSQGEILRANINFDYRFCPLNTHFFWAEFKLNFGFDTLKDEALKNARSNQPSGASFGSIFKNPKNDFAGRLIEAVGLKGFSKGDAMLSDKHANFLINKKNASFEDAFFLIELARKKVFEEFGTNLENEVIII.

The active site involves Arg-142. The Proton donor role is filled by Ser-184. Residue Glu-254 is part of the active site.

This sequence belongs to the MurB family. It depends on FAD as a cofactor.

It is found in the cytoplasm. It catalyses the reaction UDP-N-acetyl-alpha-D-muramate + NADP(+) = UDP-N-acetyl-3-O-(1-carboxyvinyl)-alpha-D-glucosamine + NADPH + H(+). The protein operates within cell wall biogenesis; peptidoglycan biosynthesis. In terms of biological role, cell wall formation. The chain is UDP-N-acetylenolpyruvoylglucosamine reductase from Campylobacter jejuni subsp. jejuni serotype O:2 (strain ATCC 700819 / NCTC 11168).